The chain runs to 106 residues: Large ribosomal subunit protein uL24 (106 aa).

A compositionally biased stretch (basic and acidic residues) spans 84-97 (EKIGRELGAKEKAR). The segment at 84-106 (EKIGRELGAKEKARLQKRKAAAK) is disordered.

The protein belongs to the universal ribosomal protein uL24 family. Part of the 50S ribosomal subunit.

In terms of biological role, one of two assembly initiator proteins, it binds directly to the 5'-end of the 23S rRNA, where it nucleates assembly of the 50S subunit. Its function is as follows. One of the proteins that surrounds the polypeptide exit tunnel on the outside of the subunit. This chain is Large ribosomal subunit protein uL24, found in Anaeromyxobacter sp. (strain K).